A 1171-amino-acid chain; its full sequence is ATP-dependent helicase/deoxyribonuclease subunit B (1171 aa).

One can recognise a UvrD-like helicase ATP-binding domain in the interval 1-343; the sequence is MSLRFVIGRA…LVAEENYRYR (343 aa). Position 8–15 (8–15) interacts with ATP; the sequence is GRAGSGKS. The UvrD-like helicase C-terminal domain occupies 281-587; the sequence is MEQPRFHSPA…QFANIPPSLD (307 aa). Positions 805, 1129, 1132, and 1138 each coordinate [4Fe-4S] cluster.

It belongs to the helicase family. AddB/RexB type 1 subfamily. In terms of assembly, heterodimer of AddA and AddB. Mg(2+) is required as a cofactor. Requires [4Fe-4S] cluster as cofactor.

In terms of biological role, the heterodimer acts as both an ATP-dependent DNA helicase and an ATP-dependent, dual-direction single-stranded exonuclease. Recognizes the chi site generating a DNA molecule suitable for the initiation of homologous recombination. The AddB subunit has 5' -&gt; 3' nuclease activity but not helicase activity. This chain is ATP-dependent helicase/deoxyribonuclease subunit B, found in Bacillus anthracis.